Here is a 264-residue protein sequence, read N- to C-terminus: S-adenosylmethionine decarboxylase proenzyme (264 aa).

Residue Ser-113 is the Schiff-base intermediate with substrate; via pyruvic acid of the active site. At Ser-113 the chain carries Pyruvic acid (Ser); by autocatalysis. The Proton acceptor; for processing activity role is filled by His-118. Cys-141 serves as the catalytic Proton donor; for catalytic activity.

This sequence belongs to the prokaryotic AdoMetDC family. Type 2 subfamily. In terms of assembly, heterooctamer of four alpha and four beta chains arranged as a tetramer of alpha/beta heterodimers. Pyruvate is required as a cofactor. In terms of processing, is synthesized initially as an inactive proenzyme. Formation of the active enzyme involves a self-maturation process in which the active site pyruvoyl group is generated from an internal serine residue via an autocatalytic post-translational modification. Two non-identical subunits are generated from the proenzyme in this reaction, and the pyruvate is formed at the N-terminus of the alpha chain, which is derived from the carboxyl end of the proenzyme. The post-translation cleavage follows an unusual pathway, termed non-hydrolytic serinolysis, in which the side chain hydroxyl group of the serine supplies its oxygen atom to form the C-terminus of the beta chain, while the remainder of the serine residue undergoes an oxidative deamination to produce ammonia and the pyruvoyl group blocking the N-terminus of the alpha chain.

It catalyses the reaction S-adenosyl-L-methionine + H(+) = S-adenosyl 3-(methylsulfanyl)propylamine + CO2. The protein operates within amine and polyamine biosynthesis; S-adenosylmethioninamine biosynthesis; S-adenosylmethioninamine from S-adenosyl-L-methionine: step 1/1. Catalyzes the decarboxylation of S-adenosylmethionine to S-adenosylmethioninamine (dcAdoMet), the propylamine donor required for the synthesis of the polyamines spermine and spermidine from the diamine putrescine. This Azotobacter vinelandii (strain DJ / ATCC BAA-1303) protein is S-adenosylmethionine decarboxylase proenzyme.